A 154-amino-acid chain; its full sequence is Large ribosomal subunit protein uL30 (154 aa).

It belongs to the universal ribosomal protein uL30 family. In terms of assembly, part of the 50S ribosomal subunit.

The polypeptide is Large ribosomal subunit protein uL30 (Methanococcus vannielii).